An 880-amino-acid polypeptide reads, in one-letter code: Zinc-responsive transcriptional regulator ZAP1 (880 aa).

Disordered regions lie at residues 1 to 26 (MDAL…AASA) and 140 to 164 (NNFH…PRRK). Residues 17 to 26 (ATSAATAASA) show a composition bias toward low complexity. Positions 147-158 (SDPTSPQQNSKS) are enriched in polar residues. Serine 156 and serine 166 each carry phosphoserine. The segment at 182–502 (KPNPPPGSDD…LTNNDLNDLI (321 aa)) is zinc-responsive domain 1 (ZRD(AD1)). The tract at residues 207–402 (HPKSEANIKQ…YEVPFGKHIN (196 aa)) is transcription activation domain 1 (AD1). 2 disordered regions span residues 436–482 (NRCN…VNNS) and 510–555 (RFRN…PSSI). The segment covering 442-456 (NNLNGSNNNTAGATS) has biased composition (low complexity). Basic residues predominate over residues 460 to 474 (QHHHHRIQFHSHKPN). Serine 515 carries the phosphoserine modification. Residues 545-555 (SSLEDSLPSSI) show a composition bias toward low complexity. A C2H2-type 1 zinc finger spans residues 579-604 (LKCKWKECPESCSSLFDLQRHLLKDH). Residues 579–641 (LKCKWKECPE…SIVNHINCQH (63 aa)) are zinc-responsive domain 2 (ZRD(AD2)). Zn(2+) is bound by residues cysteine 581, cysteine 586, histidine 599, histidine 604, cysteine 618, cysteine 623, histidine 636, and histidine 641. The tract at residues 611–640 (HPMEPLACNWEDCDFLGDDTCSIVNHINCQ) is transcription activation domain 2 (AD2). The C2H2-type 2; atypical zinc finger occupies 616-641 (LACNWEDCDFLGDDTCSIVNHINCQH). C2H2-type zinc fingers lie at residues 705-730 (VICQ…EAVH), 738-762 (YQCL…LKVH), 768-790 (YKCK…TRTH), 796-818 (YKCH…IRTH), and 824-846 (LQCK…IKTH). A DNA-binding region (DNA-binding domain) is located at residues 705–846 (VICQWDGCNK…SNLSKHIKTH (142 aa)).

The protein resides in the nucleus. Active in zinc-limited cells and repressed in replete cells. Zinc controls ZAP1 DNA binding activity. Transcription regulator controlling zinc-responsive gene expression. Binds to zinc-responsive elements (ZREs) (consensus sequence 5'-ACCYYNAAGGT-3') in the promoter of target genes. Recruits SWI/SNF, SAGA, and Mediator complexes as coactivators in a zinc-responsive manner. Involved in zinc ion homeostasis by zinc-responsive transcriptional regulation of the zinc uptake system genes ZTR1 and ZTR2. Positively regulates ETR1 expression, affecting mitochondrial function. This chain is Zinc-responsive transcriptional regulator ZAP1 (ZAP1), found in Saccharomyces cerevisiae (strain ATCC 204508 / S288c) (Baker's yeast).